The sequence spans 156 residues: Probable cyclic pyranopterin monophosphate synthase (156 aa).

Substrate-binding positions include 74–76 (LCH) and 110–111 (ME). Aspartate 125 is a catalytic residue.

It belongs to the MoaC family. As to quaternary structure, homohexamer; trimer of dimers.

The enzyme catalyses (8S)-3',8-cyclo-7,8-dihydroguanosine 5'-triphosphate = cyclic pyranopterin phosphate + diphosphate. Its pathway is cofactor biosynthesis; molybdopterin biosynthesis. Functionally, catalyzes the conversion of (8S)-3',8-cyclo-7,8-dihydroguanosine 5'-triphosphate to cyclic pyranopterin monophosphate (cPMP). The polypeptide is Probable cyclic pyranopterin monophosphate synthase (Thermococcus kodakarensis (strain ATCC BAA-918 / JCM 12380 / KOD1) (Pyrococcus kodakaraensis (strain KOD1))).